The sequence spans 181 residues: Adenine phosphoribosyltransferase (181 aa).

This sequence belongs to the purine/pyrimidine phosphoribosyltransferase family. Homodimer.

The protein localises to the cytoplasm. The enzyme catalyses AMP + diphosphate = 5-phospho-alpha-D-ribose 1-diphosphate + adenine. The protein operates within purine metabolism; AMP biosynthesis via salvage pathway; AMP from adenine: step 1/1. Functionally, catalyzes a salvage reaction resulting in the formation of AMP, that is energically less costly than de novo synthesis. In Mesorhizobium japonicum (strain LMG 29417 / CECT 9101 / MAFF 303099) (Mesorhizobium loti (strain MAFF 303099)), this protein is Adenine phosphoribosyltransferase.